Consider the following 95-residue polypeptide: Aspartyl/glutamyl-tRNA(Asn/Gln) amidotransferase subunit C (95 aa).

The protein belongs to the GatC family. As to quaternary structure, heterotrimer of A, B and C subunits.

It carries out the reaction L-glutamyl-tRNA(Gln) + L-glutamine + ATP + H2O = L-glutaminyl-tRNA(Gln) + L-glutamate + ADP + phosphate + H(+). The enzyme catalyses L-aspartyl-tRNA(Asn) + L-glutamine + ATP + H2O = L-asparaginyl-tRNA(Asn) + L-glutamate + ADP + phosphate + 2 H(+). In terms of biological role, allows the formation of correctly charged Asn-tRNA(Asn) or Gln-tRNA(Gln) through the transamidation of misacylated Asp-tRNA(Asn) or Glu-tRNA(Gln) in organisms which lack either or both of asparaginyl-tRNA or glutaminyl-tRNA synthetases. The reaction takes place in the presence of glutamine and ATP through an activated phospho-Asp-tRNA(Asn) or phospho-Glu-tRNA(Gln). This chain is Aspartyl/glutamyl-tRNA(Asn/Gln) amidotransferase subunit C, found in Bartonella quintana (strain Toulouse) (Rochalimaea quintana).